The chain runs to 338 residues: Large ribosomal subunit protein uL10 (338 aa).

A disordered region spans residues 298-338; sequence TVQQSQSQQPAAEEKKEEKKEEEKKGPSEEEIASGLASLFG. A compositionally biased stretch (basic and acidic residues) spans 309-325; that stretch reads AEEKKEEKKEEEKKGPS.

Belongs to the universal ribosomal protein uL10 family. In terms of assembly, part of the 50S ribosomal subunit. Forms part of the ribosomal stalk which helps the ribosome interact with GTP-bound translation factors. Forms a heptameric L10(L12)2(L12)2(L12)2 complex, where L10 forms an elongated spine to which the L12 dimers bind in a sequential fashion.

Its function is as follows. Forms part of the ribosomal stalk, playing a central role in the interaction of the ribosome with GTP-bound translation factors. The protein is Large ribosomal subunit protein uL10 of Saccharolobus solfataricus (strain ATCC 35092 / DSM 1617 / JCM 11322 / P2) (Sulfolobus solfataricus).